The following is a 424-amino-acid chain: STAM-binding protein (424 aa).

The interaction with CHMP3 stretch occupies residues 1 to 127; that stretch reads MSDHGDVSLP…YEQYKERKKK (127 aa). Residues Ser-2 and Ser-48 each carry the phosphoserine modification. The tract at residues 227–231 is interaction with STAM; sequence PAKPP. At Ser-243 the chain carries Phosphoserine. The 132-residue stretch at 257-388 folds into the MPN domain; it reads IVVPRNLCSE…LTDYGLQEIS (132 aa). The Zn(2+) site is built by His-335, His-337, Asp-348, His-350, Cys-390, His-396, and His-398. The JAMM motif motif lies at 335–348; the sequence is HTHPTQTAFLSSVD.

Belongs to the peptidase M67C family. Interacts with STAM. Interacts with SMAD6 and SMAD7. Interacts with CHMP3; the interaction appears to relieve the autoinhibition of CHMP3. Interacts with SMURF2 and RNF11; this interaction promotes ubiquitination. Zn(2+) serves as cofactor. In terms of processing, phosphorylated after BMP type I receptor activation. Post-translationally, ubiquitinated by SMURF2 in the presence of RNF11. In terms of tissue distribution, expressed in brain.

It is found in the nucleus. The protein resides in the membrane. Its subcellular location is the cytoplasm. The protein localises to the early endosome. Inhibited by N-ethylmaleimide. In terms of biological role, zinc metalloprotease that specifically cleaves 'Lys-63'-linked polyubiquitin chains. Does not cleave 'Lys-48'-linked polyubiquitin chains. Plays a role in signal transduction for cell growth and MYC induction mediated by IL-2 and GM-CSF. Potentiates BMP (bone morphogenetic protein) signaling by antagonizing the inhibitory action of SMAD6 and SMAD7. Has a key role in regulation of cell surface receptor-mediated endocytosis and ubiquitin-dependent sorting of receptors to lysosomes. Endosomal localization of STAMBP is required for efficient EGFR degradation but not for its internalization. Involved in the negative regulation of PI3K-AKT-mTOR and RAS-MAP signaling pathways. The polypeptide is STAM-binding protein (Stambp) (Mus musculus (Mouse)).